Consider the following 174-residue polypeptide: MAYHLLQRNRNGGLNLAKALNEAMTHIGHCNACRTFTEEEECTICKNPRRQISGQLCIVEMPEDIQAIEQTGQFSGRYFVLMGHLSPLDGIGPREIGLDLLQQRLEQESFHEIILATNPTIEGDATANYIAEICHLYNVKVTRIAHGIPVGGSLEMVDGTTLSHSFAGRRDFLL.

The segment at Cys-30 to Cys-45 adopts a C4-type zinc-finger fold. The 96-residue stretch at Gly-54 to Pro-149 folds into the Toprim domain.

Belongs to the RecR family.

May play a role in DNA repair. It seems to be involved in an RecBC-independent recombinational process of DNA repair. It may act with RecF and RecO. The sequence is that of Recombination protein RecR from Haemophilus ducreyi (strain 35000HP / ATCC 700724).